A 152-amino-acid chain; its full sequence is uncharacterized protein (152 aa).

This sequence belongs to the antirestriction protein family.

This is an uncharacterized protein from Escherichia coli (strain K12).